The primary structure comprises 185 residues: Nuclear transcription factor Y subunit B-3 (185 aa).

The span at 1–36 shows a compositional bias: gly residues; sequence MADGPGSPGGGGGSHESGSPRGGGGGGGGGGGGGGV. Positions 1–39 are disordered; the sequence is MADGPGSPGGGGGSHESGSPRGGGGGGGGGGGGGGVREQ. A DNA-binding region spans residues 43–49; it reads LPIANIS. The segment at 70–81 is subunit association domain (SAD); it reads VQECVSEFISFI. Residues 145–164 are disordered; it reads KDVLGSHGGSSSSAQGMGQQ. Residues 153–164 are compositionally biased toward low complexity; sequence GSSSSAQGMGQQ.

Belongs to the NFYB/HAP3 subunit family. In terms of assembly, heterotrimeric transcription factor composed of three components, NF-YA, NF-YB and NF-YC. NF-YB and NF-YC must interact and dimerize for NF-YA association and DNA binding. Ubiquitous.

The protein resides in the nucleus. Functionally, component of the NF-Y/HAP transcription factor complex. The NF-Y complex stimulates the transcription of various genes by recognizing and binding to a CCAAT motif in promoters. May regulate the expression of photosynthetic genes, and may be involved in chloroplast and amyloplast development. This Oryza sativa subsp. japonica (Rice) protein is Nuclear transcription factor Y subunit B-3 (NFYB3).